Consider the following 28-residue polypeptide: Short cationic peptide-1b (28 aa).

Position 28 is a glutamic acid 1-amide (Glu28).

As to expression, expressed by the venom gland.

Its subcellular location is the secreted. The polypeptide is Short cationic peptide-1b (Cupiennius salei (American wandering spider)).